The chain runs to 295 residues: MTLKKILIVSGTHGNEINPVWAINQFNKQFKTIDKNIEYKFVIGNPLAYERGCRYIDNDLNRSFTSIQDNSIYETNRANFLVEKFGFNGSEPCDVAIDLHTTTANMGTSIVMYGRRMKDFCLAALLQHKFGLPIYLHEKDLKQTGFLVEAWPCGLVLEIGSVAQNFYDPKIINRFLIIISSLRDEINKLKNNQIRLPKDLFVHVHQGSIDYPRDKNGNINALIHPERINQDWKPIKKDAPLFMDMEGKTKTYADEDTIWPVFIGEVAYKEKNIAMSFTKKEVVSVSDQMYEEFFS.

Residues His13 and Glu16 each coordinate Zn(2+). Substrate-binding positions include Arg54 and 61-62 (NR). Position 100 (His100) interacts with Zn(2+). Substrate-binding residues include Glu158 and Tyr268.

It belongs to the AspA/AstE family. Aspartoacylase subfamily. It depends on Zn(2+) as a cofactor.

It catalyses the reaction an N-acyl-L-aspartate + H2O = a carboxylate + L-aspartate. The polypeptide is Probable aspartoacylase (Prochlorococcus marinus subsp. pastoris (strain CCMP1986 / NIES-2087 / MED4)).